The chain runs to 203 residues: Glycerol-3-phosphate acyltransferase (203 aa).

Transmembrane regions (helical) follow at residues 6-26 (LTLLMIVSAYLAGSISSAVLV), 82-102 (AISLGLIAIAACLGHIYPIFF), 118-138 (APIGDDLAICLMASWVVLLLI), and 141-161 (YSSLAAIITALLAPLYTWWLD).

This sequence belongs to the PlsY family. As to quaternary structure, probably interacts with PlsX.

The protein localises to the cell inner membrane. It carries out the reaction an acyl phosphate + sn-glycerol 3-phosphate = a 1-acyl-sn-glycero-3-phosphate + phosphate. Its pathway is lipid metabolism; phospholipid metabolism. Its function is as follows. Catalyzes the transfer of an acyl group from acyl-phosphate (acyl-PO(4)) to glycerol-3-phosphate (G3P) to form lysophosphatidic acid (LPA). This enzyme utilizes acyl-phosphate as fatty acyl donor, but not acyl-CoA or acyl-ACP. The polypeptide is Glycerol-3-phosphate acyltransferase (Shewanella putrefaciens (strain CN-32 / ATCC BAA-453)).